A 188-amino-acid polypeptide reads, in one-letter code: Probable nicotinate-nucleotide adenylyltransferase (188 aa).

Belongs to the NadD family.

The enzyme catalyses nicotinate beta-D-ribonucleotide + ATP + H(+) = deamido-NAD(+) + diphosphate. The protein operates within cofactor biosynthesis; NAD(+) biosynthesis; deamido-NAD(+) from nicotinate D-ribonucleotide: step 1/1. Its function is as follows. Catalyzes the reversible adenylation of nicotinate mononucleotide (NaMN) to nicotinic acid adenine dinucleotide (NaAD). The polypeptide is Probable nicotinate-nucleotide adenylyltransferase (Listeria monocytogenes serovar 1/2a (strain ATCC BAA-679 / EGD-e)).